The primary structure comprises 254 residues: tRNA (guanine-N(1)-)-methyltransferase (254 aa).

S-adenosyl-L-methionine contacts are provided by residues Gly113 and 133–138; that span reads IGDYVL.

Belongs to the RNA methyltransferase TrmD family. In terms of assembly, homodimer.

The protein localises to the cytoplasm. The enzyme catalyses guanosine(37) in tRNA + S-adenosyl-L-methionine = N(1)-methylguanosine(37) in tRNA + S-adenosyl-L-homocysteine + H(+). Functionally, specifically methylates guanosine-37 in various tRNAs. The chain is tRNA (guanine-N(1)-)-methyltransferase from Edwardsiella ictaluri (strain 93-146).